Consider the following 502-residue polypeptide: Polyadenylate-binding protein, cytoplasmic and nuclear (502 aa).

RRM domains are found at residues 14 to 90, 96 to 176, 191 to 275, and 299 to 376; these read LTIY…KKDE, GNIF…LYNP, TNCF…KGQR, and KNLY…YFKN.

It belongs to the polyadenylate-binding protein type-1 family.

Its subcellular location is the cytoplasm. It is found in the nucleus. Functionally, binds the poly(A) tail of mRNA. Appears to be an important mediator of the multiple roles of the poly(A) tail in mRNA biogenesis, stability and translation. The protein is Polyadenylate-binding protein, cytoplasmic and nuclear (PAB1) of Encephalitozoon cuniculi (strain GB-M1) (Microsporidian parasite).